Here is a 154-residue protein sequence, read N- to C-terminus: Myoglobin (154 aa).

Positions 2 to 148 (VLSDGEWQLV…FRKDIAAKYK (147 aa)) constitute a Globin domain. A Phosphoserine modification is found at Ser4. Nitrite is bound at residue His65. An O2-binding site is contributed by His65. Thr68 carries the post-translational modification Phosphothreonine. His94 contributes to the heme b binding site.

This sequence belongs to the globin family. As to quaternary structure, monomeric.

The protein localises to the cytoplasm. It is found in the sarcoplasm. The catalysed reaction is Fe(III)-heme b-[protein] + nitric oxide + H2O = Fe(II)-heme b-[protein] + nitrite + 2 H(+). It carries out the reaction H2O2 + AH2 = A + 2 H2O. In terms of biological role, monomeric heme protein which primary function is to store oxygen and facilitate its diffusion within muscle tissues. Reversibly binds oxygen through a pentacoordinated heme iron and enables its timely and efficient release as needed during periods of heightened demand. Depending on the oxidative conditions of tissues and cells, and in addition to its ability to bind oxygen, it also has a nitrite reductase activity whereby it regulates the production of bioactive nitric oxide. Under stress conditions, like hypoxia and anoxia, it also protects cells against reactive oxygen species thanks to its pseudoperoxidase activity. The protein is Myoglobin of Balaena mysticetus (Bowhead whale).